The primary structure comprises 146 residues: UPF0306 protein HD_1359 (146 aa).

Belongs to the UPF0306 family.

The protein is UPF0306 protein HD_1359 of Haemophilus ducreyi (strain 35000HP / ATCC 700724).